A 387-amino-acid chain; its full sequence is uncharacterized protein (387 aa).

This sequence belongs to the geranylgeranyl reductase family. ChlP subfamily.

This is an uncharacterized protein from Methanocaldococcus jannaschii (strain ATCC 43067 / DSM 2661 / JAL-1 / JCM 10045 / NBRC 100440) (Methanococcus jannaschii).